The chain runs to 437 residues: Doublesex- and mab-3-related transcription factor A2 (437 aa).

The DM DNA-binding region spans 49 to 96; sequence CARCRNHGVVSALKGHKRYCRWKDCMCAKCTLIAERQRVMAAQVALRR. Disordered stretches follow at residues 163–254 and 297–317; these read SVTP…ARQR and DKSE…PSVS. Low complexity-rich tracts occupy residues 179–201 and 223–235; these read SESV…SGSE and SPSS…SESG. The DMA domain occupies 254–289; the sequence is RTPIDILTRVFPAQKRSVLELVLQGCGGDVVQAIEQ.

This sequence belongs to the DMRT family.

It is found in the nucleus. In terms of biological role, may be involved in sexual development. The polypeptide is Doublesex- and mab-3-related transcription factor A2 (dmrta2) (Xenopus tropicalis (Western clawed frog)).